A 172-amino-acid chain; its full sequence is Bifunctional protein PyrR (172 aa).

Positions 90-102 match the PRPP-binding motif; sequence LVLVDDVLMSGRT.

Belongs to the purine/pyrimidine phosphoribosyltransferase family. PyrR subfamily.

It carries out the reaction UMP + diphosphate = 5-phospho-alpha-D-ribose 1-diphosphate + uracil. Functionally, regulates the transcription of the pyrimidine nucleotide (pyr) operon in response to exogenous pyrimidines. Its function is as follows. Also displays a weak uracil phosphoribosyltransferase activity which is not physiologically significant. This Pseudomonas entomophila (strain L48) protein is Bifunctional protein PyrR.